A 152-amino-acid polypeptide reads, in one-letter code: Ribonuclease pancreatic gamma-type (152 aa).

A signal peptide spans 1-25 (MGLEKSLFLFSLLVLVLGWVQPSLG). Substrate is bound by residues Lys-35 and Arg-38. The active-site Proton acceptor is His-40. 4 disulfide bridges follow: Cys-54/Cys-112, Cys-68/Cys-123, Cys-86/Cys-138, and Cys-93/Cys-100. Substrate-binding positions include 69–73 (KSMNT), Lys-94, and Arg-113. Residue His-147 is the Proton donor of the active site.

Belongs to the pancreatic ribonuclease family. In terms of assembly, monomer.

Its subcellular location is the secreted. It carries out the reaction an [RNA] containing cytidine + H2O = an [RNA]-3'-cytidine-3'-phosphate + a 5'-hydroxy-ribonucleotide-3'-[RNA].. The catalysed reaction is an [RNA] containing uridine + H2O = an [RNA]-3'-uridine-3'-phosphate + a 5'-hydroxy-ribonucleotide-3'-[RNA].. Endonuclease that catalyzes the cleavage of RNA on the 3' side of pyrimidine nucleotides. Acts on single-stranded and double-stranded RNA. The protein is Ribonuclease pancreatic gamma-type of Rattus norvegicus (Rat).